A 1577-amino-acid polypeptide reads, in one-letter code: Vacuolar protein sorting/targeting protein PEP1 (1577 aa).

A signal peptide spans 1–21; sequence MILLHFVYSLWALLLIPLINA. The Lumenal segment spans residues 22-1391; sequence EEFTPKVTKT…EFKEKYSVSA (1370 aa). 2 BNR repeats span residues 58–68 and 101–111; these read ISFDDGETWEK and YITNDQGKSWE. N-linked (GlcNAc...) asparagine glycans are attached at residues Asn121 and Asn168. BNR repeat units follow at residues 179 to 187 and 414 to 423; these read SNDGGKSFS and ISVDNGLTWT. N-linked (GlcNAc...) asparagine glycosylation is present at Asn445. BNR repeat units follow at residues 485–495, 531–541, and 762–771; these read FISRDGGLTWK, YYSLDQGKTWT, and YISHDGGQTI. Asn791 carries N-linked (GlcNAc...) asparagine glycosylation. A BNR 8 repeat occupies 859–869; that stretch reads YLTNDGGETFT. N-linked (GlcNAc...) asparagine glycosylation occurs at Asn1008. BNR repeat units follow at residues 1141–1150 and 1183–1192; these read FFTTDGGETW and YSTDFGKTWK. An N-linked (GlcNAc...) asparagine glycan is attached at Asn1301. Residues 1392–1412 traverse the membrane as a helical segment; the sequence is GPFAFIFISILLIIFFAAWFV. Over 1413-1577 the chain is Cytoplasmic; the sequence is YDRGIRRNGG…DSTAPSNENQ (165 aa). The disordered stretch occupies residues 1531-1577; the sequence is DDVPTLEEEHTSYTDQPTTTDVPDALPEGNEENIDRPDSTAPSNENQ.

Belongs to the VPS10-related sortilin family.

Its subcellular location is the golgi apparatus. The protein localises to the trans-Golgi network membrane. It is found in the prevacuolar compartment membrane. Functions as a sorting receptor in the Golgi compartment required for the intracellular sorting and delivery of soluble vacuolar proteins, like carboxypeptidase Y (CPY) and proteinase A. Executes multiple rounds of sorting by cycling between the late Golgi and a prevacuolar endosome-like compartment. Binds the Golgi-modified P2 form of CPY, and this interaction is dependent on the presence of an intact CPY vacuolar protein sorting signal. The protein is Vacuolar protein sorting/targeting protein PEP1 (PEP1) of Saccharomyces cerevisiae (strain Lalvin EC1118 / Prise de mousse) (Baker's yeast).